A 46-amino-acid polypeptide reads, in one-letter code: Defensin-like protein AX1 (46 aa).

4 disulfide bridges follow: cysteine 3–cysteine 46, cysteine 14–cysteine 34, cysteine 20–cysteine 40, and cysteine 24–cysteine 42.

As to expression, leaves and flowers.

Strong inhibiting activity against C.beticola and other filamentous fungi. Little or no effect against bacteria. In Beta vulgaris (Sugar beet), this protein is Defensin-like protein AX1.